Here is a 254-residue protein sequence, read N- to C-terminus: 5-keto-D-gluconate 5-reductase (254 aa).

13–37 (LITGSAQGIGFLLATGLGKYGAQII) contacts NADP(+). A substrate-binding site is contributed by S145. The Proton acceptor role is filled by Y158.

It belongs to the short-chain dehydrogenases/reductases (SDR) family.

It catalyses the reaction D-gluconate + NAD(+) = 5-dehydro-D-gluconate + NADH + H(+). The enzyme catalyses D-gluconate + NADP(+) = 5-dehydro-D-gluconate + NADPH + H(+). It functions in the pathway carbohydrate acid metabolism; L-idonate degradation. Its function is as follows. Catalyzes the reduction of 5-keto-D-gluconate to D-gluconate, using either NADH or NADPH. Is likely involved in an L-idonate degradation pathway that allows E.coli to utilize L-idonate as the sole carbon and energy source. Is also able to catalyze the reverse reaction in vitro, but the D-gluconate oxidation by the enzyme can only proceed with NAD. The protein is 5-keto-D-gluconate 5-reductase of Escherichia coli O6:H1 (strain CFT073 / ATCC 700928 / UPEC).